A 311-amino-acid polypeptide reads, in one-letter code: uncharacterized protein (311 aa).

The next 9 membrane-spanning stretches (helical) occupy residues 11-31 (LDNW…GYLS), 34-54 (VGIV…FLSL), 72-92 (LAIS…LFGI), 101-121 (HVIV…FVAQ), 147-167 (IEGI…WYLM), 198-218 (WFGV…FALS), 233-253 (GFIA…SIVI), 257-277 (FALA…TYLL), and 279-299 (TIPF…NVGP).

The protein localises to the cell membrane. This is an uncharacterized protein from Mycoplasma pneumoniae (strain ATCC 29342 / M129 / Subtype 1) (Mycoplasmoides pneumoniae).